Reading from the N-terminus, the 345-residue chain is IGF-like family receptor 1 (345 aa).

A signal peptide spans 1–20; the sequence is MGPSWLLWTVAVAVLLLTRA. Topologically, residues 21 to 163 are extracellular; sequence ASMEASSFCG…SSRPGFVSAS (143 aa). An N-linked (GlcNAc...) asparagine glycan is attached at N87. The interval 106 to 149 is disordered; the sequence is VESPGRTHKQCRKKPVPPKDVCPLKPEDAGASSSPGRWSLGQTT. Residues 111–121 are compositionally biased toward basic residues; that stretch reads RTHKQCRKKPV. Positions 136-149 are enriched in polar residues; that stretch reads ASSSPGRWSLGQTT. A helical membrane pass occupies residues 164 to 184; it reads VLPLAVLPLLLVLLLILAVVL. Residues 185-345 are Cytoplasmic-facing; the sequence is LSLFKRKVRS…DALQVLSKLG (161 aa).

As to expression, ubiquitously expressed with higher expression in lymph node. Highly expressed in T-cells and monocytes.

It localises to the cell membrane. In terms of biological role, probable cell membrane receptor for the IGF-like family protein IGFL. This is IGF-like family receptor 1 (Igflr1) from Mus musculus (Mouse).